We begin with the raw amino-acid sequence, 411 residues long: UPF0761 membrane protein PA0951 (411 aa).

Transmembrane regions (helical) follow at residues 36-56 (LFAVVPMMTVMFSMLSLIPAF), 92-112 (HLTWVGVVFLAVTAFTMLVTI), 132-152 (FLLYWAILSLGPLLLGAGFAV), 174-194 (LLGLMPLAFSVAAFTLLYSAV), 207-229 (GGVFTAVLFEAAKTLFGLYVSLF), and 244-264 (IFLLWIYLSWMIVLFGAVLVC).

The protein belongs to the UPF0761 family.

It localises to the cell inner membrane. This Pseudomonas aeruginosa (strain ATCC 15692 / DSM 22644 / CIP 104116 / JCM 14847 / LMG 12228 / 1C / PRS 101 / PAO1) protein is UPF0761 membrane protein PA0951.